The sequence spans 321 residues: Quinol oxidase subunit 2 (321 aa).

The N-terminal stretch at 1–25 is a signal peptide; the sequence is MIFLFRALKPLLVLALLTVVFVLGG. Residue Cys-26 is the site of N-palmitoyl cysteine attachment. Cys-26 is lipidated: S-diacylglycerol cysteine. Transmembrane regions (helical) follow at residues 49–69 and 90–110; these read SIGFMLFIVGVVFVLFTIILV and TFLEVVWTVIPILIVIALSVP. A disordered region spans residues 294 to 321; that stretch reads QAVSPHSKTDPFENVKENEFKKSDDTEE. Basic and acidic residues predominate over residues 300-321; that stretch reads SKTDPFENVKENEFKKSDDTEE.

The protein belongs to the cytochrome c oxidase subunit 2 family.

Its subcellular location is the cell membrane. The catalysed reaction is 2 a quinol + O2 = 2 a quinone + 2 H2O. Catalyzes quinol oxidation with the concomitant reduction of oxygen to water. Major component for energy conversion during vegetative growth. Subunit II transfers the electrons from a quinol to the binuclear center of the catalytic subunit I. This is Quinol oxidase subunit 2 (qoxA) from Bacillus spizizenii (strain ATCC 23059 / NRRL B-14472 / W23) (Bacillus subtilis subsp. spizizenii).